A 531-amino-acid polypeptide reads, in one-letter code: Probable inactive beta-glucosidase 25 (531 aa).

An N-terminal signal peptide occupies residues 1-24; the sequence is MALKAILFLGLFLVVIVSPITVYG. A beta-D-glucoside is bound by residues Gln-53 and 202–203; that span reads NE. The Proton donor role is filled by Glu-203. An intrachain disulfide couples Cys-222 to Cys-230. A beta-D-glucoside-binding positions include Phe-348 and 477–478; that span reads EW.

The protein belongs to the glycosyl hydrolase 1 family.

The protein is Probable inactive beta-glucosidase 25 of Arabidopsis thaliana (Mouse-ear cress).